We begin with the raw amino-acid sequence, 401 residues long: CinA-like protein (401 aa).

This sequence belongs to the CinA family.

This Thermosipho melanesiensis (strain DSM 12029 / CIP 104789 / BI429) protein is CinA-like protein.